A 607-amino-acid polypeptide reads, in one-letter code: Large ribosomal subunit assembly factor BipA (607 aa).

Residues His3–Asn198 enclose the tr-type G domain. GTP contacts are provided by residues Asp15–Thr20 and Asn128–Asp131.

Belongs to the TRAFAC class translation factor GTPase superfamily. Classic translation factor GTPase family. BipA subfamily. In terms of assembly, monomer.

It localises to the cytoplasm. It catalyses the reaction GTP + H2O = GDP + phosphate + H(+). A 50S ribosomal subunit assembly protein with GTPase activity, required for 50S subunit assembly at low temperatures, may also play a role in translation. Binds GTP and analogs. Binds the 70S ribosome between the 30S and 50S subunits, in a similar position as ribosome-bound EF-G; it contacts a number of ribosomal proteins, both rRNAs and the A-site tRNA. The chain is Large ribosomal subunit assembly factor BipA from Buchnera aphidicola subsp. Acyrthosiphon pisum (strain APS) (Acyrthosiphon pisum symbiotic bacterium).